A 319-amino-acid polypeptide reads, in one-letter code: Ferrochelatase (319 aa).

2 residues coordinate Fe cation: histidine 194 and glutamate 275.

It belongs to the ferrochelatase family.

It is found in the cytoplasm. The catalysed reaction is heme b + 2 H(+) = protoporphyrin IX + Fe(2+). It functions in the pathway porphyrin-containing compound metabolism; protoheme biosynthesis; protoheme from protoporphyrin-IX: step 1/1. In terms of biological role, catalyzes the ferrous insertion into protoporphyrin IX. The sequence is that of Ferrochelatase from Vibrio vulnificus (strain CMCP6).